The following is a 136-amino-acid chain: MASHEQSYKAGRAEGRAHEKGEQMKESMKEKAEAAKQKTMETAEAAKQKTMETAEAAKQKTRGAAETTNDKTKQTAGAARGKAEETKETSGGILQQAGEKVRNAAQGATDAVKHTFGMADADEDEHNYPATVTRKD.

Disordered stretches follow at residues 1–108 (MASH…AQGA) and 117–136 (GMADADEDEHNYPATVTRKD). A compositionally biased stretch (basic and acidic residues) spans 11–58 (GRAEGRAHEKGEQMKESMKEKAEAAKQKTMETAEAAKQKTMETAEAAK). LEA 11-mer repeat repeat units follow at residues 31 to 41 (KAEAAKQKTME), 42 to 52 (TAEAAKQKTME), 53 to 63 (TAEAAKQKTRG), 64 to 74 (AAETTNDKTKQ), and 75 to 85 (TAGAARGKAEE).

Belongs to the LEA type 4 family.

Its function is as follows. LEA proteins are late embryonic proteins abundant in higher plant seed embryos. There are two subsets of LEA proteins (5a and 5b), the first ones are expressed when the cotyledon weight reach 80 mg and the second set are expressed above 100 mg. The function of those proteins is not known. The polypeptide is Late embryogenesis abundant protein D-7 (Gossypium hirsutum (Upland cotton)).